A 299-amino-acid polypeptide reads, in one-letter code: MLFQEIIFKLNEFWHNQGCIIQQPYDIEVGAGTMNPATFFRVLGPEPWYVAYVEPSRRPTDGRYGENPNRLQHYYQYQVILKPSPADVQEIYIESLKYLGIEIEKHDIRFVEDNWESPTLGAWGIGWEVWLDGMEITQFTYFQQCGGFDLFPVSAEITYGLERIAMYIQGVDDFKAIKWQDNVTYGDVHLQSEVENCIYNFELADVERLRLLFNEYEKEAERLLNQGLTFPAYDYVLKCSHTFNLLDARGAISVVQRSQYISRIRRLAARAAENYLKSREALGFPLLNKAWRKEEARLG.

Belongs to the class-II aminoacyl-tRNA synthetase family. Tetramer of two alpha and two beta subunits.

It localises to the cytoplasm. The catalysed reaction is tRNA(Gly) + glycine + ATP = glycyl-tRNA(Gly) + AMP + diphosphate. This Dictyoglomus turgidum (strain DSM 6724 / Z-1310) protein is Glycine--tRNA ligase alpha subunit.